We begin with the raw amino-acid sequence, 339 residues long: Anthranilate phosphoribosyltransferase (339 aa).

Residues Gly79, 82 to 83 (GD), Thr87, 89 to 92 (NVST), 107 to 115 (KHGNRSVSS), and Ser119 contribute to the 5-phospho-alpha-D-ribose 1-diphosphate site. Gly79 is an anthranilate binding site. Ser91 contacts Mg(2+). Asn110 is an anthranilate binding site. Arg165 serves as a coordination point for anthranilate. Residues Asp224 and Glu225 each contribute to the Mg(2+) site.

The protein belongs to the anthranilate phosphoribosyltransferase family. In terms of assembly, homodimer. It depends on Mg(2+) as a cofactor.

The enzyme catalyses N-(5-phospho-beta-D-ribosyl)anthranilate + diphosphate = 5-phospho-alpha-D-ribose 1-diphosphate + anthranilate. Its pathway is amino-acid biosynthesis; L-tryptophan biosynthesis; L-tryptophan from chorismate: step 2/5. Functionally, catalyzes the transfer of the phosphoribosyl group of 5-phosphorylribose-1-pyrophosphate (PRPP) to anthranilate to yield N-(5'-phosphoribosyl)-anthranilate (PRA). This Caldivirga maquilingensis (strain ATCC 700844 / DSM 13496 / JCM 10307 / IC-167) protein is Anthranilate phosphoribosyltransferase.